The following is a 537-amino-acid chain: Chaperonin GroEL (537 aa).

ATP contacts are provided by residues 29–32 (TLGP), 86–90 (DGTTT), Gly-413, and Asp-492.

It belongs to the chaperonin (HSP60) family. In terms of assembly, forms a cylinder of 14 subunits composed of two heptameric rings stacked back-to-back. Interacts with the co-chaperonin GroES.

It is found in the cytoplasm. The enzyme catalyses ATP + H2O + a folded polypeptide = ADP + phosphate + an unfolded polypeptide.. In terms of biological role, together with its co-chaperonin GroES, plays an essential role in assisting protein folding. The GroEL-GroES system forms a nano-cage that allows encapsulation of the non-native substrate proteins and provides a physical environment optimized to promote and accelerate protein folding. The protein is Chaperonin GroEL of Dehalococcoides mccartyi (strain CBDB1).